A 280-amino-acid chain; its full sequence is Protein lyl-1 (280 aa).

Positions 1–60 (MCPPQAQAEVGPTMTEKAEMVCAPSPAPAPPPKPASPGPPQVEEVGHRGGSSPPRLPPGV) are disordered. The span at 25–40 (SPAPAPPPKPASPGPP) shows a compositional bias: pro residues. Residues 150–202 (ARRVFTNSRERWRQQNVNGAFAELRKLLPTHPPDRKLSKNEVLRLAMKYIGFL) form the bHLH domain. The tract at residues 214–280 (AAGPTPPGPR…EQTALSPEVR (67 aa)) is disordered. A compositionally biased stretch (basic and acidic residues) spans 229–245 (RVPDDGARRGSGRRAEA). Low complexity predominate over residues 257 to 267 (PDGSPGGAARP). Residues Ser260 and Ser276 each carry the phosphoserine modification.

In terms of assembly, efficient DNA binding requires dimerization with another bHLH protein.

Its subcellular location is the nucleus. The protein is Protein lyl-1 (LYL1) of Homo sapiens (Human).